Here is a 949-residue protein sequence, read N- to C-terminus: Thrombospondin-4-B (949 aa).

A signal peptide spans methionine 1–alanine 22. Residues glutamate 23–aspartate 198 enclose the Laminin G-like domain. Cystine bridges form between cysteine 276-cysteine 287, cysteine 281-cysteine 296, cysteine 299-cysteine 310, cysteine 316-cysteine 327, cysteine 321-cysteine 336, cysteine 339-cysteine 363, cysteine 369-cysteine 383, cysteine 377-cysteine 392, cysteine 395-cysteine 407, cysteine 413-cysteine 427, cysteine 421-cysteine 437, cysteine 439-cysteine 450, cysteine 466-cysteine 471, cysteine 476-cysteine 496, cysteine 512-cysteine 532, cysteine 535-cysteine 555, cysteine 571-cysteine 591, cysteine 594-cysteine 614, cysteine 632-cysteine 652, cysteine 672-cysteine 692, and cysteine 708-cysteine 929. The 38-residue stretch at aspartate 312 to glutamate 349 folds into the EGF-like 1; calcium-binding domain. The region spanning aspartate 365–lysine 408 is the EGF-like 2; calcium-binding domain. One can recognise an EGF-like 3 domain in the interval proline 409–glycine 451. TSP type-3 repeat units lie at residues lysine 452–glutamine 484, glutamate 485–glutamine 520, glutamine 521–glutamine 543, arginine 544–glutamine 579, leucine 580–glutamine 602, serine 603–glutamine 640, leucine 641–glutamine 680, and isoleucine 681–leucine 716. Positions aspartate 578–asparagine 671 are disordered. N-linked (GlcNAc...) asparagine glycosylation is found at asparagine 601 and asparagine 637. Acidic residues predominate over residues glycine 649–glycine 660. In terms of domain architecture, TSP C-terminal spans arginine 720–proline 934. Asparagine 930 is a glycosylation site (N-linked (GlcNAc...) asparagine).

Belongs to the thrombospondin family. In terms of assembly, homotrimer; disulfide-linked.

It is found in the endoplasmic reticulum. The protein localises to the sarcoplasmic reticulum. Its subcellular location is the secreted. It localises to the extracellular space. The protein resides in the extracellular matrix. In terms of biological role, adhesive glycoprotein that mediates cell-to-cell and cell-to-matrix interactions and may be involved in various processes including cellular proliferation, migration, adhesion and attachment. May play a role in ER stress response. The sequence is that of Thrombospondin-4-B (thbs4b) from Danio rerio (Zebrafish).